Consider the following 58-residue polypeptide: Mesomartoxin (58 aa).

The signal sequence occupies residues 1–29; sequence MMSRLSVFILIALVLSVIIDVLNNSKVEG. 3 cysteine pairs are disulfide-bonded: C31/C49, C35/C54, and C39/C56.

This sequence belongs to the short scorpion toxin superfamily. Potassium channel inhibitor family. Alpha-KTx 26 subfamily. In terms of tissue distribution, expressed by the venom gland.

It localises to the secreted. Recombinant toxin that reversibly blocks the voltage-gated potassium channels Shaker (IC(50)=0.054 nM), rKv1.2/KCNA2 (IC(50)=15.6 nM), and rKv1.3/KCNA3 (IC(50)=12.5 uM). This is Mesomartoxin from Olivierus martensii (Manchurian scorpion).